The sequence spans 345 residues: MTATNKQVILKDYVSGFPTESDFDFTTTTVELRVPEGTNSVLVKNLYLSCDPYMRIRMGKPDPSTAALAQAYTPGQPIQGYGVSRIIESGHPDYKKGDLLWGIVAWEEYSVITPMTHAHFKIQHTDVPLSYYTGLLGMPGMTAYAGFYEVCSPKEGETVYVSAASGAVGQLVGQLAKMMGCYVVGSAGSKEKVDLLKTKFGFDDAFNYKEESDLTAALKRCFPNGIDIYFENVGGKMLDAVLVNMNMHGRIAVCGMISQYNLENQEGVHNLSNIIYKRIRIQGFVVSDFYDKYSKFLEFVLPHIREGKITYVEDVADGLEKAPEALVGLFHGKNVGKQVVVVARE.

NADP(+)-binding positions include 52 to 53 (PY), 163 to 169 (AASGAVG), G188, K192, Y208, N232, C254, Y260, 284 to 286 (FVV), F330, and 334 to 336 (NVG). Y53 serves as a coordination point for substrate. Y260 serves as a coordination point for substrate.

It belongs to the NADP-dependent oxidoreductase L4BD family. In terms of assembly, homodimer. As to expression, expressed in leaves.

The protein localises to the cytoplasm. It localises to the nucleus. It is found in the nucleoplasm. The enzyme catalyses an n-alkanal + NAD(+) = an alk-2-enal + NADH + H(+). It carries out the reaction an n-alkanal + NADP(+) = an alk-2-enal + NADPH + H(+). Its activity is regulated as follows. Inhibited by N-ethylmaleimide and p-chloromercuribenzoic acid. Functionally, involved in the detoxification of reactive carbonyls. Acts on lipid peroxide-derived reactive aldehydes. Specific to a double bond activated by an adjacent carbonyl group. Can use both quinones and diamide as substrates, but not menadione, ferricyanide or phylloquinone. Can use 4-hydroxy-(2E)-nonenal (HNE), 4-hydroxy-(2E)-hexenal (HHE), (2E)-nonenal, (2E)-hexenal, (2E)-pentenal, propenal (acrolein), 3-buten-2-one and 3-penten-2-one, but not (R)-(-)-carvone, n-nonanal, n-hexanal, (3Z)-hexanal, cyclohex-2-en-1-one or 12-oxo phytodienoic acid (OPDA) as electron acceptors. Catalyzes the reduction of the alpha,beta-unsaturated bond of 2-alkenals, of lipid peroxide-derived oxenes 9-oxo-10(E),12(Z)-octadecadienoic acid (9-KODE) and 13-oxo-9(Z),11(E)-octadecadienoic acid (13-KODE), as well as 4-oxo-(2E)-nonenal and 4-hydroxynonenal. Can use 12-oxo-10(E) dodecanoate (traumatin), trans-1,3 diphenyl-2-propenone, trans-1,4-diphenyl-2-butene-1,4-dione, 9-oxo-12,13-epoxy-(10E)-octadecenoic acid (trans-EKODE-1b) and 9,13-dihydroxy-10-oxo-11-octadecenoic acid as substrates. Catalyzes the reduction of the 7-8 double bond of phenylpropanal substrates, such as p-coumaryl aldehyde and coniferyl aldehyde (in vitro). Has activity towards toxic substrates, such as 4-hydroxy-(2E)-nonenal (in vitro). May play a distinct role in plant antioxidant defense and is possibly involved in NAD(P)/NAD(P)H homeostasis. The chain is NADPH-dependent oxidoreductase 2-alkenal reductase from Arabidopsis thaliana (Mouse-ear cress).